A 456-amino-acid chain; its full sequence is Bifunctional protein GlmU (456 aa).

Residues 1–228 (MPQNTLNIVI…SYLAAGVNNK (228 aa)) are pyrophosphorylase. UDP-N-acetyl-alpha-D-glucosamine is bound by residues 11 to 14 (LAAG), Lys25, Gln75, 80 to 81 (GT), 102 to 104 (YGD), Gly138, Glu153, Asn168, and Asn226. Residue Asp104 participates in Mg(2+) binding. Mg(2+) is bound at residue Asn226. Positions 229-249 (LQLAELERIFQTEQAQELLKA) are linker. The segment at 250–456 (GVTLSDPARF…GWVRPEKDKQ (207 aa)) is N-acetyltransferase. UDP-N-acetyl-alpha-D-glucosamine-binding residues include Arg332 and Lys350. His362 (proton acceptor) is an active-site residue. Tyr365 and Asn376 together coordinate UDP-N-acetyl-alpha-D-glucosamine. Acetyl-CoA-binding positions include Ala379, 385 to 386 (NY), Ser404, Ala422, and Arg439.

It in the N-terminal section; belongs to the N-acetylglucosamine-1-phosphate uridyltransferase family. In the C-terminal section; belongs to the transferase hexapeptide repeat family. As to quaternary structure, homotrimer. Mg(2+) is required as a cofactor.

It is found in the cytoplasm. It catalyses the reaction alpha-D-glucosamine 1-phosphate + acetyl-CoA = N-acetyl-alpha-D-glucosamine 1-phosphate + CoA + H(+). It carries out the reaction N-acetyl-alpha-D-glucosamine 1-phosphate + UTP + H(+) = UDP-N-acetyl-alpha-D-glucosamine + diphosphate. It participates in nucleotide-sugar biosynthesis; UDP-N-acetyl-alpha-D-glucosamine biosynthesis; N-acetyl-alpha-D-glucosamine 1-phosphate from alpha-D-glucosamine 6-phosphate (route II): step 2/2. The protein operates within nucleotide-sugar biosynthesis; UDP-N-acetyl-alpha-D-glucosamine biosynthesis; UDP-N-acetyl-alpha-D-glucosamine from N-acetyl-alpha-D-glucosamine 1-phosphate: step 1/1. Its pathway is bacterial outer membrane biogenesis; LPS lipid A biosynthesis. Functionally, catalyzes the last two sequential reactions in the de novo biosynthetic pathway for UDP-N-acetylglucosamine (UDP-GlcNAc). The C-terminal domain catalyzes the transfer of acetyl group from acetyl coenzyme A to glucosamine-1-phosphate (GlcN-1-P) to produce N-acetylglucosamine-1-phosphate (GlcNAc-1-P), which is converted into UDP-GlcNAc by the transfer of uridine 5-monophosphate (from uridine 5-triphosphate), a reaction catalyzed by the N-terminal domain. The sequence is that of Bifunctional protein GlmU from Neisseria meningitidis serogroup C / serotype 2a (strain ATCC 700532 / DSM 15464 / FAM18).